The primary structure comprises 190 residues: MATETKLSQMEEFIRAFLEIDADSNEMIDKQELIKYCQKYRLDMKLIDPWIARFDTDKDNKISIEEFCRGFGLKVSEIRREKDELKKERDGKFPKLPPNIEIIAATMSKTKQYEICCQFKEYVDNTSRTGNDMREVANKMKSLLDNTYGRVWQVVLLTGSYWMNFSHEPFLSIQFKYNNYVCLAWRTPSQ.

EF-hand domains are found at residues 8–43 (SQME…YRLD) and 51–77 (IARF…KVSE). Ca(2+) contacts are provided by Asp-55, Asp-57, Asp-59, Lys-61, and Glu-66.

As to expression, adult and schistosomula tegument.

This is Tegument antigen from Schistosoma mansoni (Blood fluke).